A 245-amino-acid chain; its full sequence is Aliphatic sulfonates import ATP-binding protein SsuB 1 (245 aa).

The 219-residue stretch at 9-227 folds into the ABC transporter domain; it reads LDLVGIGHRY…HRGDAQLAAW (219 aa). 41–48 serves as a coordination point for ATP; the sequence is GPSGVGKS.

Belongs to the ABC transporter superfamily. Aliphatic sulfonates importer (TC 3.A.1.17.2) family. The complex is composed of two ATP-binding proteins (SsuB), two transmembrane proteins (SsuC) and a solute-binding protein (SsuA).

It is found in the cell membrane. It carries out the reaction ATP + H2O + aliphatic sulfonate-[sulfonate-binding protein]Side 1 = ADP + phosphate + aliphatic sulfonateSide 2 + [sulfonate-binding protein]Side 1.. Functionally, part of the ABC transporter complex SsuABC involved in aliphatic sulfonates import. Responsible for energy coupling to the transport system. In Rhodococcus jostii (strain RHA1), this protein is Aliphatic sulfonates import ATP-binding protein SsuB 1.